A 527-amino-acid polypeptide reads, in one-letter code: Phosphoenolpyruvate carboxykinase (ATP) (527 aa).

Residues arginine 56, tyrosine 192, and lysine 198 each coordinate substrate. ATP-binding positions include lysine 198, histidine 217, and 233-241 (GLSGTGKTT). Residues lysine 198 and histidine 217 each contribute to the Mn(2+) site. Aspartate 254 serves as a coordination point for Mn(2+). Glutamate 282, arginine 319, and threonine 444 together coordinate ATP. Arginine 319 provides a ligand contact to substrate.

It belongs to the phosphoenolpyruvate carboxykinase (ATP) family. It depends on Mn(2+) as a cofactor.

The protein localises to the cytoplasm. The enzyme catalyses oxaloacetate + ATP = phosphoenolpyruvate + ADP + CO2. It participates in carbohydrate biosynthesis; gluconeogenesis. Functionally, involved in the gluconeogenesis. Catalyzes the conversion of oxaloacetate (OAA) to phosphoenolpyruvate (PEP) through direct phosphoryl transfer between the nucleoside triphosphate and OAA. This Bacillus velezensis (strain DSM 23117 / BGSC 10A6 / LMG 26770 / FZB42) (Bacillus amyloliquefaciens subsp. plantarum) protein is Phosphoenolpyruvate carboxykinase (ATP).